Here is an 812-residue protein sequence, read N- to C-terminus: 1,4-alpha-glucan branching enzyme GlgB (812 aa).

Positions 1–11 (MNNGDVNNGTA) are enriched in polar residues. Positions 1 to 83 (MNNGDVNNGT…SALPADPPAV (83 aa)) are disordered. The span at 49 to 64 (SSASAQPGQTADDPAV) shows a compositional bias: low complexity. A compositionally biased stretch (pro residues) spans 65–83 (PSAPPSAPPSALPADPPAV). D490 acts as the Nucleophile in catalysis. Catalysis depends on E543, which acts as the Proton donor.

The protein belongs to the glycosyl hydrolase 13 family. GlgB subfamily. As to quaternary structure, monomer.

The catalysed reaction is Transfers a segment of a (1-&gt;4)-alpha-D-glucan chain to a primary hydroxy group in a similar glucan chain.. It participates in glycan biosynthesis; glycogen biosynthesis. Its function is as follows. Catalyzes the formation of the alpha-1,6-glucosidic linkages in glycogen by scission of a 1,4-alpha-linked oligosaccharide from growing alpha-1,4-glucan chains and the subsequent attachment of the oligosaccharide to the alpha-1,6 position. The chain is 1,4-alpha-glucan branching enzyme GlgB from Frankia casuarinae (strain DSM 45818 / CECT 9043 / HFP020203 / CcI3).